We begin with the raw amino-acid sequence, 176 residues long: Cytochrome b (176 aa).

3 consecutive transmembrane segments (helical) span residues 33-53 (FGSL…FLAM), 77-98 (WLIR…FLHV), and 113-133 (WNIG…GYVL). Residues H83 and H97 each contribute to the heme b site.

This sequence belongs to the cytochrome b family. The cytochrome bc1 complex contains 11 subunits: 3 respiratory subunits (MT-CYB, CYC1 and UQCRFS1), 2 core proteins (UQCRC1 and UQCRC2) and 6 low-molecular weight proteins (UQCRH/QCR6, UQCRB/QCR7, UQCRQ/QCR8, UQCR10/QCR9, UQCR11/QCR10 and a cleavage product of UQCRFS1). This cytochrome bc1 complex then forms a dimer. Heme b serves as cofactor.

Its subcellular location is the mitochondrion inner membrane. Functionally, component of the ubiquinol-cytochrome c reductase complex (complex III or cytochrome b-c1 complex) that is part of the mitochondrial respiratory chain. The b-c1 complex mediates electron transfer from ubiquinol to cytochrome c. Contributes to the generation of a proton gradient across the mitochondrial membrane that is then used for ATP synthesis. The protein is Cytochrome b (MT-CYB) of Sciurus carolinensis (Eastern gray squirrel).